The chain runs to 317 residues: Acetyl-coenzyme A carboxylase carboxyl transferase subunit alpha (317 aa).

Residues 40–293 (LEGRVRDAMV…EAVIGDALKE (254 aa)) form the CoA carboxyltransferase C-terminal domain.

Belongs to the AccA family. Acetyl-CoA carboxylase is a heterohexamer composed of biotin carboxyl carrier protein (AccB), biotin carboxylase (AccC) and two subunits each of ACCase subunit alpha (AccA) and ACCase subunit beta (AccD).

It is found in the cytoplasm. It catalyses the reaction N(6)-carboxybiotinyl-L-lysyl-[protein] + acetyl-CoA = N(6)-biotinyl-L-lysyl-[protein] + malonyl-CoA. The protein operates within lipid metabolism; malonyl-CoA biosynthesis; malonyl-CoA from acetyl-CoA: step 1/1. Component of the acetyl coenzyme A carboxylase (ACC) complex. First, biotin carboxylase catalyzes the carboxylation of biotin on its carrier protein (BCCP) and then the CO(2) group is transferred by the carboxyltransferase to acetyl-CoA to form malonyl-CoA. The protein is Acetyl-coenzyme A carboxylase carboxyl transferase subunit alpha of Sinorhizobium medicae (strain WSM419) (Ensifer medicae).